We begin with the raw amino-acid sequence, 141 residues long: Hemoglobin subunit alpha-A (141 aa).

Residues 1-141 (VLSGSDKTNV…VGNVLTAKYR (141 aa)) form the Globin domain. O2 is bound at residue His-58. His-87 is a binding site for heme b.

Belongs to the globin family. Heterotetramer of two alpha chains and two beta chains. Red blood cells.

Its function is as follows. Involved in oxygen transport from the lung to the various peripheral tissues. This is Hemoglobin subunit alpha-A (HBAA) from Chroicocephalus ridibundus (Black-headed gull).